The sequence spans 947 residues: Valine--tRNA ligase (947 aa).

A 'HIGH' region motif is present at residues 45–55 (PNVTGSLHMGH). The 'KMSKS' region signature appears at 591 to 595 (KMSKS). Lys594 is an ATP binding site.

Belongs to the class-I aminoacyl-tRNA synthetase family. ValS type 1 subfamily. In terms of assembly, monomer.

The protein localises to the cytoplasm. It catalyses the reaction tRNA(Val) + L-valine + ATP = L-valyl-tRNA(Val) + AMP + diphosphate. In terms of biological role, catalyzes the attachment of valine to tRNA(Val). As ValRS can inadvertently accommodate and process structurally similar amino acids such as threonine, to avoid such errors, it has a 'posttransfer' editing activity that hydrolyzes mischarged Thr-tRNA(Val) in a tRNA-dependent manner. The polypeptide is Valine--tRNA ligase (Rhizobium meliloti (strain 1021) (Ensifer meliloti)).